The following is a 229-amino-acid chain: Enolase-phosphatase E1 (229 aa).

It belongs to the HAD-like hydrolase superfamily. MasA/MtnC family. In terms of assembly, monomer. It depends on Mg(2+) as a cofactor.

It catalyses the reaction 5-methylsulfanyl-2,3-dioxopentyl phosphate + H2O = 1,2-dihydroxy-5-(methylsulfanyl)pent-1-en-3-one + phosphate. Its pathway is amino-acid biosynthesis; L-methionine biosynthesis via salvage pathway; L-methionine from S-methyl-5-thio-alpha-D-ribose 1-phosphate: step 3/6. It participates in amino-acid biosynthesis; L-methionine biosynthesis via salvage pathway; L-methionine from S-methyl-5-thio-alpha-D-ribose 1-phosphate: step 4/6. Functionally, bifunctional enzyme that catalyzes the enolization of 2,3-diketo-5-methylthiopentyl-1-phosphate (DK-MTP-1-P) into the intermediate 2-hydroxy-3-keto-5-methylthiopentenyl-1-phosphate (HK-MTPenyl-1-P), which is then dephosphorylated to form the acireductone 1,2-dihydroxy-3-keto-5-methylthiopentene (DHK-MTPene). The sequence is that of Enolase-phosphatase E1 from Citrobacter koseri (strain ATCC BAA-895 / CDC 4225-83 / SGSC4696).